The primary structure comprises 148 residues: Antigen GM6 (148 aa).

The disordered stretch occupies residues Lys1–Glu22. Repeat copies occupy residues Lys1–Ala68 and Lys69–Ala136. The stretch at Lys137 to Ser148 is one 3; truncated repeat.

Its subcellular location is the cytoplasm. The protein resides in the cytoskeleton. The sequence is that of Antigen GM6 (GM6) from Trypanosoma brucei gambiense.